Here is a 227-residue protein sequence, read N- to C-terminus: Cytochrome c oxidase subunit 2 (227 aa).

Residues 1–14 (MAHPFQTGLQDATS) lie on the Mitochondrial intermembrane side of the membrane. Residues 15–45 (PIMEELLHFHDHTLMIVFLISSLVLYIISIM) traverse the membrane as a helical segment. Over 46–59 (LTTKLTHTNTMDAQ) the chain is Mitochondrial matrix. A helical transmembrane segment spans residues 60 to 87 (EVETVWTILPAIILIMIALPSLRILYMM). Residues 88–227 (DEINNPSLTV…YFEKWSASML (140 aa)) lie on the Mitochondrial intermembrane side of the membrane. Residues His-161, Cys-196, Glu-198, Cys-200, His-204, and Met-207 each contribute to the Cu cation site. Glu-198 provides a ligand contact to Mg(2+). Tyr-218 is modified (phosphotyrosine).

It belongs to the cytochrome c oxidase subunit 2 family. In terms of assembly, component of the cytochrome c oxidase (complex IV, CIV), a multisubunit enzyme composed of 14 subunits. The complex is composed of a catalytic core of 3 subunits MT-CO1, MT-CO2 and MT-CO3, encoded in the mitochondrial DNA, and 11 supernumerary subunits COX4I, COX5A, COX5B, COX6A, COX6B, COX6C, COX7A, COX7B, COX7C, COX8 and NDUFA4, which are encoded in the nuclear genome. The complex exists as a monomer or a dimer and forms supercomplexes (SCs) in the inner mitochondrial membrane with NADH-ubiquinone oxidoreductase (complex I, CI) and ubiquinol-cytochrome c oxidoreductase (cytochrome b-c1 complex, complex III, CIII), resulting in different assemblies (supercomplex SCI(1)III(2)IV(1) and megacomplex MCI(2)III(2)IV(2)). Found in a complex with TMEM177, COA6, COX18, COX20, SCO1 and SCO2. Interacts with TMEM177 in a COX20-dependent manner. Interacts with COX20. Interacts with COX16. Requires Cu cation as cofactor.

The protein resides in the mitochondrion inner membrane. It carries out the reaction 4 Fe(II)-[cytochrome c] + O2 + 8 H(+)(in) = 4 Fe(III)-[cytochrome c] + 2 H2O + 4 H(+)(out). Functionally, component of the cytochrome c oxidase, the last enzyme in the mitochondrial electron transport chain which drives oxidative phosphorylation. The respiratory chain contains 3 multisubunit complexes succinate dehydrogenase (complex II, CII), ubiquinol-cytochrome c oxidoreductase (cytochrome b-c1 complex, complex III, CIII) and cytochrome c oxidase (complex IV, CIV), that cooperate to transfer electrons derived from NADH and succinate to molecular oxygen, creating an electrochemical gradient over the inner membrane that drives transmembrane transport and the ATP synthase. Cytochrome c oxidase is the component of the respiratory chain that catalyzes the reduction of oxygen to water. Electrons originating from reduced cytochrome c in the intermembrane space (IMS) are transferred via the dinuclear copper A center (CU(A)) of subunit 2 and heme A of subunit 1 to the active site in subunit 1, a binuclear center (BNC) formed by heme A3 and copper B (CU(B)). The BNC reduces molecular oxygen to 2 water molecules using 4 electrons from cytochrome c in the IMS and 4 protons from the mitochondrial matrix. The protein is Cytochrome c oxidase subunit 2 (MT-CO2) of Ailuropoda melanoleuca (Giant panda).